The primary structure comprises 617 residues: Elongation factor 4 (617 aa).

Positions 17-198 constitute a tr-type G domain; sequence AIIRNFCIIA…KIVRDLPAPV (182 aa). GTP contacts are provided by residues 29 to 34 and 145 to 148; these read DHGKST and NKID.

This sequence belongs to the TRAFAC class translation factor GTPase superfamily. Classic translation factor GTPase family. LepA subfamily.

The protein resides in the cell membrane. It carries out the reaction GTP + H2O = GDP + phosphate + H(+). Its function is as follows. Required for accurate and efficient protein synthesis under certain stress conditions. May act as a fidelity factor of the translation reaction, by catalyzing a one-codon backward translocation of tRNAs on improperly translocated ribosomes. Back-translocation proceeds from a post-translocation (POST) complex to a pre-translocation (PRE) complex, thus giving elongation factor G a second chance to translocate the tRNAs correctly. Binds to ribosomes in a GTP-dependent manner. This Arthrobacter sp. (strain FB24) protein is Elongation factor 4.